The chain runs to 540 residues: Chaperonin GroEL (540 aa).

Residues 29–32 (TLGP), 86–90 (DGTTT), Gly-413, 476–478 (NAA), and Asp-492 each bind ATP.

This sequence belongs to the chaperonin (HSP60) family. Forms a cylinder of 14 subunits composed of two heptameric rings stacked back-to-back. Interacts with the co-chaperonin GroES.

Its subcellular location is the cytoplasm. The catalysed reaction is ATP + H2O + a folded polypeptide = ADP + phosphate + an unfolded polypeptide.. In terms of biological role, together with its co-chaperonin GroES, plays an essential role in assisting protein folding. The GroEL-GroES system forms a nano-cage that allows encapsulation of the non-native substrate proteins and provides a physical environment optimized to promote and accelerate protein folding. The sequence is that of Chaperonin GroEL from Streptococcus sanguinis.